The chain runs to 157 residues: Ribonuclease H (157 aa).

The 142-residue stretch at 5-146 (IMKQVEIFTD…CDDLARTAAE (142 aa)) folds into the RNase H type-1 domain. 4 residues coordinate Mg(2+): D14, E52, D74, and D138.

The protein belongs to the RNase H family. Monomer. Mg(2+) serves as cofactor.

The protein localises to the cytoplasm. The catalysed reaction is Endonucleolytic cleavage to 5'-phosphomonoester.. Functionally, endonuclease that specifically degrades the RNA of RNA-DNA hybrids. This is Ribonuclease H from Aliivibrio salmonicida (strain LFI1238) (Vibrio salmonicida (strain LFI1238)).